A 473-amino-acid polypeptide reads, in one-letter code: Glycine--tRNA ligase (473 aa).

Substrate is bound by residues Arg-101 and Glu-172. ATP contacts are provided by residues 204–206 (RNE), 214–219 (FRTREF), 289–290 (EL), and 333–336 (GVER). 219–223 (FEQME) contacts substrate. A substrate-binding site is contributed by 329–333 (EPSVG).

It belongs to the class-II aminoacyl-tRNA synthetase family. Homodimer.

It localises to the cytoplasm. It carries out the reaction tRNA(Gly) + glycine + ATP = glycyl-tRNA(Gly) + AMP + diphosphate. In terms of biological role, catalyzes the attachment of glycine to tRNA(Gly). The chain is Glycine--tRNA ligase from Ureaplasma parvum serovar 3 (strain ATCC 27815 / 27 / NCTC 11736).